The following is a 443-amino-acid chain: Xaa-Pro dipeptidase (443 aa).

The Mn(2+) site is built by Asp246, Asp257, His339, Glu384, and Glu423.

This sequence belongs to the peptidase M24B family. Bacterial-type prolidase subfamily. Mn(2+) is required as a cofactor.

The catalysed reaction is Xaa-L-Pro dipeptide + H2O = an L-alpha-amino acid + L-proline. Its function is as follows. Splits dipeptides with a prolyl residue in the C-terminal position. This Shigella boydii serotype 18 (strain CDC 3083-94 / BS512) protein is Xaa-Pro dipeptidase.